A 324-amino-acid chain; its full sequence is Acetyl-coenzyme A carboxylase carboxyl transferase subunit alpha (324 aa).

One can recognise a CoA carboxyltransferase C-terminal domain in the interval 44 to 298 (RFQNQLVKLQ…KKELTEQLDS (255 aa)).

Belongs to the AccA family. As to quaternary structure, acetyl-CoA carboxylase is a heterohexamer composed of biotin carboxyl carrier protein (accB), biotin carboxylase (accC) and two subunits each of ACCase subunit alpha (accA) and ACCase subunit beta (accD).

Its subcellular location is the plastid. The protein resides in the chloroplast. It carries out the reaction N(6)-carboxybiotinyl-L-lysyl-[protein] + acetyl-CoA = N(6)-biotinyl-L-lysyl-[protein] + malonyl-CoA. It functions in the pathway lipid metabolism; malonyl-CoA biosynthesis; malonyl-CoA from acetyl-CoA: step 1/1. In terms of biological role, component of the acetyl coenzyme A carboxylase (ACC) complex. First, biotin carboxylase catalyzes the carboxylation of biotin on its carrier protein (BCCP) and then the CO(2) group is transferred by the carboxyltransferase to acetyl-CoA to form malonyl-CoA. In Pyropia yezoensis (Susabi-nori), this protein is Acetyl-coenzyme A carboxylase carboxyl transferase subunit alpha.